Consider the following 292-residue polypeptide: NAD(P)H-hydrate epimerase (292 aa).

The transit peptide at 1–52 (MYGLRTLFSLGLLVGGARLGARVAQVGALGGTCPLGQGLVADGNSQCKQFRT) directs the protein to the mitochondrion. The YjeF N-terminal domain maps to 68–279 (AQAVDEELFN…ALEKKYSLNL (212 aa)). 122–126 (NNGGD) contacts (6S)-NADPHX. Residues Asn-123 and Asp-189 each contribute to the K(+) site. (6S)-NADPHX is bound by residues 193 to 199 (GFSFKGA) and Asp-222. Position 225 (Ser-225) interacts with K(+).

The protein belongs to the NnrE/AIBP family. K(+) serves as cofactor.

The protein localises to the mitochondrion. It localises to the secreted. It carries out the reaction (6R)-NADHX = (6S)-NADHX. It catalyses the reaction (6R)-NADPHX = (6S)-NADPHX. Its function is as follows. Catalyzes the epimerization of the S- and R-forms of NAD(P)HX, a damaged form of NAD(P)H that is a result of enzymatic or heat-dependent hydration. This is a prerequisite for the S-specific NAD(P)H-hydrate dehydratase to allow the repair of both epimers of NAD(P)HX. This chain is NAD(P)H-hydrate epimerase, found in Xenopus tropicalis (Western clawed frog).